The following is a 90-amino-acid chain: NELL2-interacting cell ontogeny regulator 1 (90 aa).

An N-terminal signal peptide occupies residues 1-28 (MAPALRSLLSPRTLLLLLLSLALLGARA).

Belongs to the NICOL family. Interacts with NELL2; triggers epididymal differentiation. Interacts with cell surface receptor TFRC; the interaction mediates uptake of NICOL1 into fibroblasts. Expression is enriched in both male and female reproductive organs, including the testis, epididymis, seminal vesicles, coagulating glands, ovary and uterus, and in various non-reproductive organs such as brain, thymus and liver. In testis, expressed in both germ cells and Sertoli cells. Also expressed at low levels in the kidney. Expressed during neocortex and cerebellum development.

It localises to the secreted. It is found in the cytoplasm. Its subcellular location is the perinuclear region. MRNA-binding protein which interacts with a range of target mRNAs including SERPINE1, ACTA2, CCN2 and COL4A1 and may promote extracellular matrix production. Binds to the 3'-UTR of SERPINE1 mRNA and stabilizes the mRNA, possibly by competing for binding with SERBP1 and preventing SERBP1-mediated mRNA degradation. Also binds to the 3'-UTR of ACTA2. Testis-derived lumicrine factor that triggers epididymal differentiation and sperm maturation. In Mus musculus (Mouse), this protein is NELL2-interacting cell ontogeny regulator 1.